The sequence spans 943 residues: Netrin receptor UNC5B-a (943 aa).

Positions 1–30 (MYLSRNPSGAALAAILVALILSCNFPSSTA) are cleaved as a signal peptide. The Extracellular portion of the chain corresponds to 31–380 (GIEYSDVLPD…LESTGDVALY (350 aa)). Residues 51–148 (PHFLLEPEDA…AGTTKSKRSY (98 aa)) enclose the Ig-like domain. 9 disulfide bridges follow: Cys-72–Cys-133, Cys-84–Cys-131, Cys-177–Cys-228, Cys-261–Cys-298, Cys-265–Cys-302, Cys-276–Cys-288, Cys-317–Cys-351, Cys-321–Cys-356, and Cys-329–Cys-341. The region spanning 150 to 245 (RIAYLRKNFD…KRRSTTATVI (96 aa)) is the Ig-like C2-type domain. Asn-225 carries an N-linked (GlcNAc...) asparagine glycan. 2 TSP type-1 domains span residues 249–303 (NGGW…TMCP) and 305–357 (DGGW…GLCM). N-linked (GlcNAc...) asparagine glycosylation occurs at Asn-350. A helical transmembrane segment spans residues 381–401 (AGLVVAIFIVIILLMAVGIVV). Topologically, residues 402 to 943 (YRRNCREFDT…MLVMATDGDC (542 aa)) are cytoplasmic. The region spanning 542 to 685 (NSVTGTFGSL…LGTYAFVGES (144 aa)) is the ZU5 domain. Residues 688 to 836 (RSAIKRLQLA…LEENVKSFDP (149 aa)) are UPA domain. The 79-residue stretch at 863–941 (KICNSLDAPN…EMMLVMATDG (79 aa)) folds into the Death domain.

Belongs to the unc-5 family. As to quaternary structure, interacts (via extracellular domain) with flrt3 (via extracellular domain). Interacts with rnd1. Post-translationally, phosphorylated on cytoplasmic tyrosine residues. In the developing visual system, it is expressed within the developing optic vesicles and later become restricted to the dorsal ciliary marginal zone, a site of retinoblast proliferation and differentiation.

The protein localises to the cell membrane. Its function is as follows. Plays a role in cell-cell adhesion during embryonic development. Receptor for netrin required for axon guidance. Mediates axon repulsion of neuronal growth cones in the developing nervous system upon ligand binding. This chain is Netrin receptor UNC5B-a (unc5b-a), found in Xenopus laevis (African clawed frog).